Consider the following 128-residue polypeptide: MPFTASAQPRKQRLSLYAAPLHLRRKLLNAKLSPELQKKLGVKRLPVRRGDTVLIMRGDFKGVTGKVVKVDLKRVRIFVEGATRTNSRGQTVYYPIHPSKVMIVDVDLSDKARQKLIERRKRGQHGSS.

It belongs to the universal ribosomal protein uL24 family. In terms of assembly, part of the 50S ribosomal subunit.

In terms of biological role, one of two assembly initiator proteins, it binds directly to the 5'-end of the 23S rRNA, where it nucleates assembly of the 50S subunit. Located at the polypeptide exit tunnel on the outside of the subunit. The protein is Large ribosomal subunit protein uL24 of Pyrobaculum calidifontis (strain DSM 21063 / JCM 11548 / VA1).